Consider the following 523-residue polypeptide: Cytoplasmic dynein 1 light intermediate chain 1 (523 aa).

Positions 1–25 (MAAVGRVGSFGSSPPGLSSTYTGGP) are disordered. Residues 9-19 (SFGSSPPGLSS) show a composition bias toward low complexity. 74–81 (GEDGAGKT) is a binding site for ATP. Serine 207 carries the phosphoserine modification. Threonine 213 is subject to Phosphothreonine. Disordered stretches follow at residues 387–434 (PPTA…DPNM) and 456–523 (TGSP…GEAS). Phosphoserine occurs at positions 398 and 405. A Phosphothreonine modification is found at threonine 408. Residues serine 412, serine 419, serine 421, and serine 427 each carry the phosphoserine modification. The span at 412-421 (SVSSNVASVS) shows a compositional bias: low complexity. Residues 458 to 478 (SPGGPGVSGGSPAGGAGGGSS) show a composition bias toward gly residues. Serine 487 is subject to Phosphoserine. The span at 493 to 503 (LDVHAELDRIT) shows a compositional bias: basic and acidic residues. Residues 506 to 523 (PVTVSPTTPTSPTEGEAS) are compositionally biased toward low complexity. Serine 510 is subject to Phosphoserine. Phosphothreonine occurs at positions 512, 513, and 515. The residue at position 516 (serine 516) is a Phosphoserine.

Belongs to the dynein light intermediate chain family. In terms of assembly, homodimer. The cytoplasmic dynein 1 complex consists of two catalytic heavy chains (HCs) and a number of non-catalytic subunits presented by intermediate chains (ICs), light intermediate chains (LICs) and light chains (LCs); the composition seems to vary in respect to the IC, LIC and LC composition. The heavy chain homodimer serves as a scaffold for the probable homodimeric assembly of the respective non-catalytic subunits. The ICs and LICs bind directly to the HC dimer and the LCs assemble on the IC dimer. Self-associates. Interacts with DYNC1H1; DYNC1LI1 and DYNC1LI2 bind mutually exclusive to DYNC1H1. Interacts with PCNT. Forms a complex with RAB11FIP3 and RAB11A1; the interaction between DYNC1LI1 and RAB11FIP3 is direct and induces DYNC1LI1 localization onto endosomal membrane; the complex regulates endocytic trafficking. Interacts with RUFY3. As to quaternary structure, (Microbial infection) Interacts with human adenovirus 5 hexon protein; this interaction probably allows virus intracellular transport. In terms of processing, phosphorylated during mitosis but not in interphase.

The protein localises to the cytoplasm. It localises to the chromosome. The protein resides in the centromere. It is found in the kinetochore. Its subcellular location is the cytoskeleton. The protein localises to the spindle pole. It localises to the recycling endosome membrane. Acts as one of several non-catalytic accessory components of the cytoplasmic dynein 1 complex that are thought to be involved in linking dynein to cargos and to adapter proteins that regulate dynein function. Cytoplasmic dynein 1 acts as a motor for the intracellular retrograde motility of vesicles and organelles along microtubules. May play a role in binding dynein to membranous organelles or chromosomes. Probably involved in the microtubule-dependent transport of pericentrin. Is required for progress through the spindle assembly checkpoint. The phosphorylated form appears to be involved in the selective removal of MAD1L1 and MAD1L2 but not BUB1B from kinetochores. Forms a functional Rab11/RAB11FIP3/dynein complex onto endosomal membrane that regulates the movement of peripheral sorting endosomes (SE) along microtubule tracks toward the microtubule organizing center/centrosome, generating the endosomal recycling compartment (ERC). In Homo sapiens (Human), this protein is Cytoplasmic dynein 1 light intermediate chain 1 (DYNC1LI1).